A 278-amino-acid chain; its full sequence is Tryptophan synthase alpha chain (278 aa).

Residues Glu49 and Asp60 each act as proton acceptor in the active site.

This sequence belongs to the TrpA family. As to quaternary structure, tetramer of two alpha and two beta chains.

It carries out the reaction (1S,2R)-1-C-(indol-3-yl)glycerol 3-phosphate + L-serine = D-glyceraldehyde 3-phosphate + L-tryptophan + H2O. It functions in the pathway amino-acid biosynthesis; L-tryptophan biosynthesis; L-tryptophan from chorismate: step 5/5. In terms of biological role, the alpha subunit is responsible for the aldol cleavage of indoleglycerol phosphate to indole and glyceraldehyde 3-phosphate. In Granulibacter bethesdensis (strain ATCC BAA-1260 / CGDNIH1), this protein is Tryptophan synthase alpha chain.